We begin with the raw amino-acid sequence, 228 residues long: Phosphoglycolate phosphatase 1 (228 aa).

Residue aspartate 8 is the Nucleophile of the active site. Mg(2+)-binding residues include aspartate 8 and aspartate 10. Lysine 149 is a substrate binding site. Mg(2+) is bound by residues aspartate 172 and aspartate 176.

It belongs to the archaeal SPP-like hydrolase family. Mg(2+) is required as a cofactor.

It catalyses the reaction 2-phosphoglycolate + H2O = glycolate + phosphate. In terms of biological role, catalyzes the dephosphorylation of 2-phosphoglycolate. The chain is Phosphoglycolate phosphatase 1 from Saccharolobus solfataricus (strain ATCC 35092 / DSM 1617 / JCM 11322 / P2) (Sulfolobus solfataricus).